Here is a 223-residue protein sequence, read N- to C-terminus: Pyridoxine/pyridoxamine 5'-phosphate oxidase (223 aa).

Substrate-binding positions include 13–16 and K73; that span reads RKNY. Residues 68–73, 83–84, K90, and Q112 each bind FMN; these read RIVLLK and YT. Substrate-binding residues include Y130, R134, and S138. FMN is bound by residues 147-148 and W193; that span reads QS. Residue 199 to 201 coordinates substrate; sequence RLH. R203 lines the FMN pocket.

Belongs to the pyridoxamine 5'-phosphate oxidase family. In terms of assembly, homodimer. FMN is required as a cofactor.

The catalysed reaction is pyridoxamine 5'-phosphate + O2 + H2O = pyridoxal 5'-phosphate + H2O2 + NH4(+). It catalyses the reaction pyridoxine 5'-phosphate + O2 = pyridoxal 5'-phosphate + H2O2. Its pathway is cofactor metabolism; pyridoxal 5'-phosphate salvage; pyridoxal 5'-phosphate from pyridoxamine 5'-phosphate: step 1/1. The protein operates within cofactor metabolism; pyridoxal 5'-phosphate salvage; pyridoxal 5'-phosphate from pyridoxine 5'-phosphate: step 1/1. In terms of biological role, catalyzes the oxidation of either pyridoxine 5'-phosphate (PNP) or pyridoxamine 5'-phosphate (PMP) into pyridoxal 5'-phosphate (PLP). This is Pyridoxine/pyridoxamine 5'-phosphate oxidase from Rhodopirellula baltica (strain DSM 10527 / NCIMB 13988 / SH1).